We begin with the raw amino-acid sequence, 168 residues long: ATP synthase subunit b (168 aa).

A helical transmembrane segment spans residues 9–29 (SIPFGTIAYTLFIFLLLLVML).

The protein belongs to the ATPase B chain family. F-type ATPases have 2 components, F(1) - the catalytic core - and F(0) - the membrane proton channel. F(1) has five subunits: alpha(3), beta(3), gamma(1), delta(1), epsilon(1). F(0) has three main subunits: a(1), b(2) and c(10-14). The alpha and beta chains form an alternating ring which encloses part of the gamma chain. F(1) is attached to F(0) by a central stalk formed by the gamma and epsilon chains, while a peripheral stalk is formed by the delta and b chains.

The protein localises to the cell membrane. Functionally, f(1)F(0) ATP synthase produces ATP from ADP in the presence of a proton or sodium gradient. F-type ATPases consist of two structural domains, F(1) containing the extramembraneous catalytic core and F(0) containing the membrane proton channel, linked together by a central stalk and a peripheral stalk. During catalysis, ATP synthesis in the catalytic domain of F(1) is coupled via a rotary mechanism of the central stalk subunits to proton translocation. In terms of biological role, component of the F(0) channel, it forms part of the peripheral stalk, linking F(1) to F(0). The chain is ATP synthase subunit b from Bacillus mycoides (strain KBAB4) (Bacillus weihenstephanensis).